A 122-amino-acid chain; its full sequence is Probable DNA-directed RNA polymerase II subunit RPB11 (122 aa).

It belongs to the archaeal Rpo11/eukaryotic RPB11/RPC19 RNA polymerase subunit family. In terms of assembly, component of the RNA polymerase II (Pol II) complex consisting of 12 subunits.

It localises to the nucleus. DNA-dependent RNA polymerase catalyzes the transcription of DNA into RNA using the four ribonucleoside triphosphates as substrates. Component of RNA polymerase II which synthesizes mRNA precursors and many functional non-coding RNAs. Pol II is the central component of the basal RNA polymerase II transcription machinery. It is composed of mobile elements that move relative to each other. RPB11 is part of the core element with the central large cleft. The protein is Probable DNA-directed RNA polymerase II subunit RPB11 (rpb-11) of Caenorhabditis elegans.